The primary structure comprises 29 residues: Cyclotide mech-3 (29 aa).

Positions 1–29 (GLPTCGETCTLGKCNTPKCTCNWPICYKN) form a cross-link, cyclopeptide (Gly-Asn). Disulfide bonds link C5/C19, C9/C21, and C14/C26.

Post-translationally, this is a cyclic peptide. Contains 3 disulfide bonds.

Its function is as follows. Probably participates in a plant defense mechanism (Potential). Binds to and induces leakage in phospholipd membranes, particularly ones containing 1-palmitoyl-2-oleophosphatidylethanolamine (POPE). In vitro, displays cytotoxicity against cultured cells but no hemolytic activity towards fresh erythrocytes. This is Cyclotide mech-3 from Melicytus chathamicus (Chatham Island mahoe).